The primary structure comprises 90 residues: Small ribosomal subunit protein uS17 (90 aa).

The protein belongs to the universal ribosomal protein uS17 family. In terms of assembly, part of the 30S ribosomal subunit.

In terms of biological role, one of the primary rRNA binding proteins, it binds specifically to the 5'-end of 16S ribosomal RNA. The chain is Small ribosomal subunit protein uS17 from Treponema denticola (strain ATCC 35405 / DSM 14222 / CIP 103919 / JCM 8153 / KCTC 15104).